Here is a 466-residue protein sequence, read N- to C-terminus: MVLDNLGSSLRGSLDKLQGKSRLDEDDVEEIVKEIQRSLLSADVEVSLVMELSSSIEDRATGEEPPAGTSARDHVLRIVYEELVDLVGDSTDLPLKSQTILLAGLQGSGKTTSAAKMAWWFSTKGLRPAVIQTDTFRPGAYDQAEQMCERAEVSFYGDPDCDDPVKIAREGIEATADADIHIVDTAGRHALEADLIDEIEAIDSTVAPDRSLLVLDAAIGQGAKQQAREFNNAIGIDGVVVTKLDGTAKGGGALTAVNETDSSIAFLGTGETVQDVERFEPNGFISRLLGMGDLKQLSERVERAMAETQEADDDWDPEDIMEGSFTLKDMRKQMEAMDRMGPLDQVMDMIPGLGGGLKDQLPDDAMDVTQNRMRDFDVIMDSMTEAELEDPRSVGASRVRRIARGSGTDEETVRELLQQHKMMERTIKQFQGMGEGDMQRMMKKMQQQGGGGMGGLGGGGGLGPFG.

Residues 104–111, 184–188, and 242–245 contribute to the GTP site; these read GLQGSGKT, DTAGR, and TKLD. Residues 446 to 466 form a disordered region; it reads QQQGGGGMGGLGGGGGLGPFG. Residues 448–466 show a composition bias toward gly residues; that stretch reads QGGGGMGGLGGGGGLGPFG.

The protein belongs to the GTP-binding SRP family. SRP54 subfamily. Part of the signal recognition particle protein translocation system, which is composed of SRP and FtsY. Archaeal SRP consists of a 7S RNA molecule of 300 nucleotides and two protein subunits: SRP54 and SRP19.

It localises to the cytoplasm. It catalyses the reaction GTP + H2O = GDP + phosphate + H(+). Its function is as follows. Involved in targeting and insertion of nascent membrane proteins into the cytoplasmic membrane. Binds to the hydrophobic signal sequence of the ribosome-nascent chain (RNC) as it emerges from the ribosomes. The SRP-RNC complex is then targeted to the cytoplasmic membrane where it interacts with the SRP receptor FtsY. This chain is Signal recognition particle 54 kDa protein, found in Haloquadratum walsbyi (strain DSM 16790 / HBSQ001).